Here is a 424-residue protein sequence, read N- to C-terminus: Hydrolase ORFZ (424 aa).

The active-site Nucleophile is serine 243.

Belongs to the AB hydrolase superfamily. FUS2 hydrolase family. Homodimer.

The protein operates within secondary metabolite biosynthesis. In terms of biological role, hydrolyase; part of the gene cluster that mediates the biosynthesis of a tyrosine-derived cytochalasan acting as a fungal signal recognized by resistant rice plants and leads to avirulence in Pi33 resistant rice cultivars. The first step in the pathway is catalyzed by the hybrid PKS-NRPS ACE1, assisted by the enoyl reductase RAP1, that are responsible for fusion of the tyrosine precursor and the polyketide backbone. The polyketide synthase module (PKS) of ACE1 is responsible for the synthesis of the polyketide backbone and the downstream nonribosomal peptide synthetase (NRPS) amidates the carboxyl end of the polyketide with the tyrosine precursor. Because ACE1 lacks a designated enoylreductase (ER) domain, the required activity is provided the enoyl reductase RAP1. Reduction by the hydrolyase ORFZ, followed by dehydration and intra-molecular Diels-Alder cyclization by the Diels-Alderase ORF3 then yield the required isoindolone-fused macrocycle. A number of oxidative steps catalyzed by the tailoring enzymes identified within the cluster, including cytochrome P450 monooxygenases CYP1 to CYP4, the FAD-linked oxidoreductase OXR2 and the short-chain dehydrogenase/reductase OXR1, are further required to afford the final cytochalasans that confer avirulence and which have still to be identified. The monooxygenase CYP1 has been shown to be a site-selective C-18 hydroxylase whereas the function of CYP3 is the site-selective epoxidation of the C-6/C-7 olefin that is present in some intermediate compounds. Finally, SYN2 and RAP2 are not required for avirulence in Pi33 resistant rice cultivars. The chain is Hydrolase ORFZ from Pyricularia oryzae (strain 70-15 / ATCC MYA-4617 / FGSC 8958) (Rice blast fungus).